A 299-amino-acid chain; its full sequence is DNA-binding transcriptional repressor CapW (299 aa).

The segment covering 1-15 (MPDNFREGDKQDSQK) has biased composition (basic and acidic residues). The segment at 1-21 (MPDNFREGDKQDSQKGRQGAR) is disordered. The segment at 1-95 (MPDNFREGDK…LFQPVYMTSS (95 aa)) is winged HTH domain. The segment at 96-207 (LECYLNDLLQ…LSRIVQAQNA (112 aa)) is WYL domain. A WYL domain is found at 131-211 (LRRLDTDVVS…VQAQNAGPDE (81 aa)). The interval 156–200 (YQSMSDPQGSKRTLTPHSLVHDGYRWHTRAWCHKRGEYRDFLLSR) is probable ligand-binding region. Residues 208–299 (GPDEERANGD…KDEIYALLKQ (92 aa)) are WCX domain.

As to quaternary structure, homodimer.

Functionally, transcriptional regulator of a CBASS antivirus system. CBASS (cyclic oligonucleotide-based antiphage signaling system) provides immunity against bacteriophage. The CD-NTase protein synthesizes cyclic nucleotides in response to infection; these serve as specific second messenger signals. The signals activate a diverse range of effectors, leading to bacterial cell death and thus abortive phage infection. A type III CBASS system. Expression of this CBASS system (Cap18-Cap6-Cap7-CdnC-CapW-Cap17) in a susceptible E.coli (strain MG1655) confers resistance to bacteriophage P1. Binds specifically to and represses expression from the CBASS promoter, found between the genes for divergently transcribed capW and cdnC. The sequence is that of DNA-binding transcriptional repressor CapW from Escherichia coli (strain KTE188).